A 479-amino-acid chain; its full sequence is Adenylate kinase 8 (479 aa).

Adenylate kinase regions lie at residues 58-258 and 269-471; these read PKVV…TYVQ and PKVL…SGII. Residue 67-72 participates in ATP binding; that stretch reads ASGKTT. The interval 87 to 113 is NMP 1; sequence TKESLLEREFSRLSVEAKSYYQVYKKI. Residues 140–143, Gln147, and Arg203 each bind AMP; that span reads GIPE. The tract at residues 177–206 is LID 1; the sequence is GKRIDPVTGEIYHTTFDWPPEPEIQNRLRQ. Residue 278 to 283 coordinates ATP; sequence GSGKRL. Residues 298–327 form an NMP 2 region; it reads SCGQLLKEAVAAKSSFGELIQPFFEKRMTV. Residues 325-327, 354-357, and Gln361 contribute to the AMP site; these read MTV and GFPR. The interval 391–424 is LID 2; it reads LRRTDPVTGERFHLMYKPPPTIEVQVRLLQNPKD. Position 392 (Arg392) interacts with ATP.

This sequence belongs to the adenylate kinase family. Interacts with CFAP45 and CFAP52; CFAP45 and AK8 dimerization may create a cavity at the interface of the dimer that can accommodate AMP.

It is found in the cytoplasm. It localises to the cytosol. The protein localises to the cytoskeleton. The protein resides in the cilium axoneme. It carries out the reaction AMP + ATP = 2 ADP. The enzyme catalyses a 2'-deoxyribonucleoside 5'-diphosphate + ATP = a 2'-deoxyribonucleoside 5'-triphosphate + ADP. The catalysed reaction is a ribonucleoside 5'-diphosphate + ATP = a ribonucleoside 5'-triphosphate + ADP. Its function is as follows. Nucleoside monophosphate (NMP) kinase that catalyzes the reversible transfer of the terminal phosphate group between nucleoside triphosphates and monophosphates. Has highest activity toward AMP, and weaker activity toward dAMP, CMP and dCMP. Also displays broad nucleoside diphosphate kinase activity. The sequence is that of Adenylate kinase 8 (Ak8) from Mus musculus (Mouse).